Reading from the N-terminus, the 216-residue chain is Ornithine decarboxylase antizyme 1 (216 aa).

Belongs to the ODC antizyme family. As to quaternary structure, interacts with ODC1 and thereby sterically blocks ODC homodimerization.

Ornithine decarboxylase (ODC) antizyme protein that negatively regulates ODC activity and intracellular polyamine biosynthesis and uptake in response to increased intracellular polyamine levels. Binds to ODC monomers, inhibiting the assembly of the functional ODC homodimer, and targets the monomers for ubiquitin-independent proteolytic destruction by the 26S proteasome. The polypeptide is Ornithine decarboxylase antizyme 1 (oaz1) (Xenopus laevis (African clawed frog)).